Reading from the N-terminus, the 754-residue chain is Phosphoribosylformylglycinamidine synthase subunit PurL (754 aa).

His-52 is a catalytic residue. The ATP site is built by Tyr-55 and Lys-95. Position 97 (Glu-97) interacts with Mg(2+). Substrate-binding positions include 98–101 and Arg-120; that span reads SHNH. The active-site Proton acceptor is His-99. A Mg(2+)-binding site is contributed by Asp-121. Gln-244 lines the substrate pocket. Asp-272 provides a ligand contact to Mg(2+). Substrate is bound at residue 316-318; sequence ESQ. ATP is bound by residues Asn-504 and Gly-541. Asn-542 is a binding site for Mg(2+). Substrate is bound at residue Ser-544.

It belongs to the FGAMS family. In terms of assembly, monomer. Part of the FGAM synthase complex composed of 1 PurL, 1 PurQ and 2 PurS subunits.

It localises to the cytoplasm. It carries out the reaction N(2)-formyl-N(1)-(5-phospho-beta-D-ribosyl)glycinamide + L-glutamine + ATP + H2O = 2-formamido-N(1)-(5-O-phospho-beta-D-ribosyl)acetamidine + L-glutamate + ADP + phosphate + H(+). It functions in the pathway purine metabolism; IMP biosynthesis via de novo pathway; 5-amino-1-(5-phospho-D-ribosyl)imidazole from N(2)-formyl-N(1)-(5-phospho-D-ribosyl)glycinamide: step 1/2. Part of the phosphoribosylformylglycinamidine synthase complex involved in the purines biosynthetic pathway. Catalyzes the ATP-dependent conversion of formylglycinamide ribonucleotide (FGAR) and glutamine to yield formylglycinamidine ribonucleotide (FGAM) and glutamate. The FGAM synthase complex is composed of three subunits. PurQ produces an ammonia molecule by converting glutamine to glutamate. PurL transfers the ammonia molecule to FGAR to form FGAM in an ATP-dependent manner. PurS interacts with PurQ and PurL and is thought to assist in the transfer of the ammonia molecule from PurQ to PurL. The protein is Phosphoribosylformylglycinamidine synthase subunit PurL of Salinibacter ruber (strain DSM 13855 / M31).